A 141-amino-acid polypeptide reads, in one-letter code: Large ribosomal subunit protein uL16c (141 aa).

It belongs to the universal ribosomal protein uL16 family. Part of the 50S ribosomal subunit.

It is found in the plastid. Its subcellular location is the chloroplast. The polypeptide is Large ribosomal subunit protein uL16c (Zygnema circumcarinatum (Green alga)).